The following is a 322-amino-acid chain: Protein-methionine-sulfoxide reductase catalytic subunit MsrP (322 aa).

Positions 1–59 form a signal peptide, tat-type signal; that stretch reads MSLRDALKTPSSEITDEAVYRDRRRLLQLFALTPALSVAGCAEADPPPPPKTVVTPAQA. Mo-molybdopterin-binding positions include Asn79, 82 to 83, Cys137, Thr172, Asn220, Arg225, and 236 to 238; these read YE and SIK.

The protein belongs to the MsrP family. As to quaternary structure, heterodimer of a catalytic subunit (MsrP) and a heme-binding subunit (MsrQ). The cofactor is Mo-molybdopterin. Predicted to be exported by the Tat system. The position of the signal peptide cleavage has not been experimentally proven.

It is found in the periplasm. The enzyme catalyses L-methionyl-[protein] + a quinone + H2O = L-methionyl-(S)-S-oxide-[protein] + a quinol. It catalyses the reaction L-methionyl-[protein] + a quinone + H2O = L-methionyl-(R)-S-oxide-[protein] + a quinol. In terms of biological role, part of the MsrPQ system that repairs oxidized periplasmic proteins containing methionine sulfoxide residues (Met-O), using respiratory chain electrons. Thus protects these proteins from oxidative-stress damage caused by reactive species of oxygen and chlorine generated by the host defense mechanisms. MsrPQ is essential for the maintenance of envelope integrity under bleach stress, rescuing a wide series of structurally unrelated periplasmic proteins from methionine oxidation. The catalytic subunit MsrP is non-stereospecific, being able to reduce both (R-) and (S-) diastereoisomers of methionine sulfoxide. The sequence is that of Protein-methionine-sulfoxide reductase catalytic subunit MsrP from Xanthomonas campestris pv. campestris (strain ATCC 33913 / DSM 3586 / NCPPB 528 / LMG 568 / P 25).